Reading from the N-terminus, the 499-residue chain is Apolipoprotein N-acyltransferase (499 aa).

Helical transmembrane passes span 9–29 (LLLG…PALL), 50–70 (LGYI…SIGV), 77–97 (FWWA…FFVS), 114–134 (FIFC…FTGL), 148–168 (ILIQ…VIYI), and 183–203 (LKVL…YGSV). Residues 220-464 (VQPSIPQTEK…DGLIPKKLDS (245 aa)) enclose the CN hydrolase domain. Glutamate 259 (proton acceptor) is an active-site residue. Lysine 322 is an active-site residue. The active-site Nucleophile is cysteine 372. The chain crosses the membrane as a helical span at residues 466–486 (TIFSKFGNITILLIVFFIFLV).

It belongs to the CN hydrolase family. Apolipoprotein N-acyltransferase subfamily.

It is found in the cell inner membrane. It catalyses the reaction N-terminal S-1,2-diacyl-sn-glyceryl-L-cysteinyl-[lipoprotein] + a glycerophospholipid = N-acyl-S-1,2-diacyl-sn-glyceryl-L-cysteinyl-[lipoprotein] + a 2-acyl-sn-glycero-3-phospholipid + H(+). Its pathway is protein modification; lipoprotein biosynthesis (N-acyl transfer). Its function is as follows. Catalyzes the phospholipid dependent N-acylation of the N-terminal cysteine of apolipoprotein, the last step in lipoprotein maturation. The chain is Apolipoprotein N-acyltransferase from Rickettsia bellii (strain RML369-C).